The chain runs to 142 residues: Large ribosomal subunit protein uL11 (142 aa).

Belongs to the universal ribosomal protein uL11 family. As to quaternary structure, part of the ribosomal stalk of the 50S ribosomal subunit. Interacts with L10 and the large rRNA to form the base of the stalk. L10 forms an elongated spine to which L12 dimers bind in a sequential fashion forming a multimeric L10(L12)X complex. One or more lysine residues are methylated.

Forms part of the ribosomal stalk which helps the ribosome interact with GTP-bound translation factors. This is Large ribosomal subunit protein uL11 from Mycoplasma mycoides subsp. mycoides SC (strain CCUG 32753 / NCTC 10114 / PG1).